A 513-amino-acid polypeptide reads, in one-letter code: Probable helicase MJ1565 (513 aa).

ATP is bound by residues Arg151, 160–165, and 467–468; these read GMGKSN and KV.

Belongs to the HerA family.

The catalysed reaction is Couples ATP hydrolysis with the unwinding of duplex DNA at the replication fork by translocating in the 5'-3' direction. This creates two antiparallel DNA single strands (ssDNA). The leading ssDNA polymer is the template for DNA polymerase III holoenzyme which synthesizes a continuous strand.. The enzyme catalyses ATP + H2O = ADP + phosphate + H(+). It catalyses the reaction Couples ATP hydrolysis with the unwinding of duplex DNA by translocating in the 3'-5' direction.. A probably bidirectional DNA helicase. The protein is Probable helicase MJ1565 of Methanocaldococcus jannaschii (strain ATCC 43067 / DSM 2661 / JAL-1 / JCM 10045 / NBRC 100440) (Methanococcus jannaschii).